The chain runs to 427 residues: tRNA(Ile)-lysidine synthase (427 aa).

18–23 (SGGLDS) is an ATP binding site.

Belongs to the tRNA(Ile)-lysidine synthase family.

It localises to the cytoplasm. It carries out the reaction cytidine(34) in tRNA(Ile2) + L-lysine + ATP = lysidine(34) in tRNA(Ile2) + AMP + diphosphate + H(+). Functionally, ligates lysine onto the cytidine present at position 34 of the AUA codon-specific tRNA(Ile) that contains the anticodon CAU, in an ATP-dependent manner. Cytidine is converted to lysidine, thus changing the amino acid specificity of the tRNA from methionine to isoleucine. This Pseudomonas putida (strain ATCC 47054 / DSM 6125 / CFBP 8728 / NCIMB 11950 / KT2440) protein is tRNA(Ile)-lysidine synthase.